Reading from the N-terminus, the 54-residue chain is Ovomucoid (54 aa).

The Kazal-like domain occupies 4–54 (VDCSDYPKPACLLEYMPLCGSDNKTYDNKCSFCNAVVDSNGTLSLSHFGKC). 3 disulfides stabilise this stretch: cysteine 6-cysteine 36, cysteine 14-cysteine 33, and cysteine 22-cysteine 54. A glycan (N-linked (GlcNAc...) asparagine) is linked at asparagine 43.

The protein resides in the secreted. The chain is Ovomucoid from Opisthocomus hoazin (Hoatzin).